Consider the following 147-residue polypeptide: MLNKVFIIGRLTGDPVITYLPSGTPVVEFTLAYNRRYKNQNGEFQEESHFFDVKAYGKMAEDWATRFSKGYLVLVEGRLSQEKWEKEGKKFSKVRIIAENVRLINRPKGAELQAEEEEEVPPIEEEIEKLGKEEEKPFTDEEDEIPF.

One can recognise an SSB domain in the interval 1–105 (MLNKVFIIGR…IIAENVRLIN (105 aa)). Positions 108–147 (KGAELQAEEEEEVPPIEEEIEKLGKEEEKPFTDEEDEIPF) are disordered. Positions 113–127 (QAEEEEEVPPIEEEI) are enriched in acidic residues. The segment covering 128–139 (EKLGKEEEKPFT) has biased composition (basic and acidic residues). Residues 142–147 (EDEIPF) carry the Important for interaction with partner proteins motif.

Homotetramer.

Its function is as follows. Plays an important role in DNA replication, recombination and repair. Binds to ssDNA and to an array of partner proteins to recruit them to their sites of action during DNA metabolism. The polypeptide is Single-stranded DNA-binding protein (ssb) (Aquifex aeolicus (strain VF5)).